A 159-amino-acid polypeptide reads, in one-letter code: Transcriptional repressor NrdR (159 aa).

Residues C3–C34 fold into a zinc finger. Residues P49–D139 form the ATP-cone domain.

Belongs to the NrdR family. Zn(2+) is required as a cofactor.

In terms of biological role, negatively regulates transcription of bacterial ribonucleotide reductase nrd genes and operons by binding to NrdR-boxes. This is Transcriptional repressor NrdR from Nitrosomonas europaea (strain ATCC 19718 / CIP 103999 / KCTC 2705 / NBRC 14298).